We begin with the raw amino-acid sequence, 87 residues long: Translation initiation factor IF-1 2 (87 aa).

The S1-like domain occupies 1 to 72 (MAKEELLELD…TKGRINFRHK (72 aa)).

Belongs to the IF-1 family. Component of the 30S ribosomal translation pre-initiation complex which assembles on the 30S ribosome in the order IF-2 and IF-3, IF-1 and N-formylmethionyl-tRNA(fMet); mRNA recruitment can occur at any time during PIC assembly.

It is found in the cytoplasm. One of the essential components for the initiation of protein synthesis. Stabilizes the binding of IF-2 and IF-3 on the 30S subunit to which N-formylmethionyl-tRNA(fMet) subsequently binds. Helps modulate mRNA selection, yielding the 30S pre-initiation complex (PIC). Upon addition of the 50S ribosomal subunit IF-1, IF-2 and IF-3 are released leaving the mature 70S translation initiation complex. This Burkholderia ambifaria (strain ATCC BAA-244 / DSM 16087 / CCUG 44356 / LMG 19182 / AMMD) (Burkholderia cepacia (strain AMMD)) protein is Translation initiation factor IF-1 2.